A 1659-amino-acid chain; its full sequence is Intersectin-2 (1659 aa).

Residues 22–110 (ERTKHDKQFD…PIMKQPPMFS (89 aa)) form the EH 1 domain. The EF-hand 1 domain maps to 54–89 (LPAPVLAEIWALSDLNKDGKMDQQEFSIAMKLIKLK). Residues Asp67, Asn69, Asp71, Lys73, and Glu78 each contribute to the Ca(2+) site. Residues Ser110, Ser211, and Ser231 each carry the phosphoserine modification. Residues 220-231 (STSSTASLSGNS) are compositionally biased toward low complexity. The segment at 220-242 (STSSTASLSGNSPKTGTSEWAVP) is disordered. The EH 2 domain occupies 245–334 (SRLKYRQKFN…PELVPPSFRG (90 aa)). The EF-hand 2 domain maps to 278–313 (LSQTQLATIWTLADIDGDGQLKAEEFILAMHLTDMA). Residues 335–382 (GKQVDSVNGTLPSYQKTQEEEPQKKLPVTFEDKRKANYERGNMELEKR) are disordered. Over residues 339 to 350 (DSVNGTLPSYQK) the composition is skewed to polar residues. Residues 351 to 382 (TQEEEPQKKLPVTFEDKRKANYERGNMELEKR) show a composition bias toward basic and acidic residues. The stretch at 365–717 (EDKRKANYER…KAEAKQSETA (353 aa)) forms a coiled coil. Tyr554 bears the Phosphotyrosine mark. Thr574 carries the post-translational modification Phosphothreonine. A compositionally biased stretch (basic and acidic residues) spans 689 to 713 (KQKRLQEEKSQDKTQEEERKAEAKQ). The segment at 689-715 (KQKRLQEEKSQDKTQEEERKAEAKQSE) is disordered. An SH3 1 domain is found at 718–779 (SALVNYRALY…PCNYVEKVLS (62 aa)). Thr836 carries the phosphothreonine modification. Phosphoserine occurs at positions 838 and 843. The 59-residue stretch at 852 to 910 (VENLKAQALCSWTAKKENHLNFSKHDVITVLEQQENWWFGEVHGGRGWFPKSYVKLIPG) folds into the SH3 2 domain. A Phosphotyrosine modification is found at Tyr922. 3 SH3 domains span residues 942-1000 (PVGE…PKDQ), 1014-1078 (KKPE…LLGP), and 1088-1147 (HAVC…MTTD). Residues 1170 to 1357 (KRQGYIHELI…EELCSQVNEG (188 aa)) form the DH domain. One can recognise a PH domain in the interval 1396–1506 (KLLHSGKLYK…WVQKIKGASE (111 aa)). The C2 domain occupies 1514-1630 (KKREKAYQAR…RTEQESKGPT (117 aa)). 3 residues coordinate Ca(2+): Asp1602, Ser1605, and Asp1608.

As to quaternary structure, belongs to a complex that may contain multimers of ITSN1, ITSN2 and EPS15, and different partners according to the step in the endocytic process. Interacts with ADAM15. Interacts with FASLG. Interacts with ANKRD54. Interacts with FCHO2. Requires Ca(2+) as cofactor. In terms of tissue distribution, widely expressed in adult tissues.

It localises to the cytoplasm. In terms of biological role, adapter protein that may provide indirect link between the endocytic membrane traffic and the actin assembly machinery. May regulate the formation of clathrin-coated vesicles (CCPs). Seems to be involved in CCPs maturation including invagination or budding. Involved in endocytosis of integrin beta-1 (ITGB1) and transferrin receptor (TFR). Plays a role in dendrite formation by melanocytes. The polypeptide is Intersectin-2 (Itsn2) (Mus musculus (Mouse)).